We begin with the raw amino-acid sequence, 104 residues long: Histone H4 (104 aa).

A disordered region spans residues 1–21; sequence MAGRGKVGKGYGKVGAKRHTK.

The protein belongs to the histone H4 family. In terms of assembly, the nucleosome is a histone octamer containing two molecules each of H2A, H2B, H3 and H4 assembled in one H3-H4 heterotetramer and two H2A-H2B heterodimers. The octamer wraps approximately 147 bp of DNA.

It localises to the nucleus. It is found in the chromosome. Functionally, core component of nucleosome. Nucleosomes wrap and compact DNA into chromatin, limiting DNA accessibility to the cellular machineries which require DNA as a template. Histones thereby play a central role in transcription regulation, DNA repair, DNA replication and chromosomal stability. DNA accessibility is regulated via a complex set of post-translational modifications of histones, also called histone code, and nucleosome remodeling. The chain is Histone H4 from Sterkiella nova (Ciliate).